A 134-amino-acid polypeptide reads, in one-letter code: Cerato-platanin (134 aa).

Residues 1-14 form the signal peptide; that stretch reads MKFSILPMIASAMA. The tract at residues 18–20 is binding of oligomers of N-acetylglucosamine (GlcNAc); the sequence is SYD. Binding of N-acetylglucosamine tetramer (GlcNAc-4) regions lie at residues 31 to 43, 65 to 68, and 91 to 95; these read SVAC…GLMA, GWDS, and DSGRG. Intrachain disulfides connect C34–C71 and C74–C129. Residues 113–116 are binding of oligomers of N-acetylglucosamine (GlcNAc); that stretch reads AGRV.

This sequence belongs to the cerato-platanin family. As to quaternary structure, monomer.

The protein resides in the secreted. The protein localises to the cell wall. Functionally, phytotoxin which causes production of phytoalexin in platanus acerifolia, platanus occidentalis and platanus orientalis. Induces cell necrosis in tobacco leaves, and in callus cells and leaves of P.acerifolia. Induces reactive oxygen species (ROS) synthesis, nitric oxide (NO) production and mitogen-activated protein kinases (MAPKs) phosphorylation in the leaves of A.thaliana and P.acerifolia. Results in H(2)O(2) production on the epidermis around the stomata, rapid closure of the stomata, reduced photosynthetic and CO(2) assimilation rate, and an increase in a number of volatile organic compound (VOC) emission in A.thaliana leaves. Induces overexpression of genes related to salicylic acid- and ethylene-signaling, camalexin synthesis, ROS production and oxidative stress, and genes of various receptor kinases, and down-regulation of a number of jasmonic acid (JA)-signaling genes in A.thaliana leaves. Renders resistance against C.platani in A.thaliana and P.acerifolia. Renders localised resistance of A.thaliana against infection by virulent foliar pathogens B.cinerea and P.syringae pv. tomato. Binds cellulose analog carboxymethyl cellulose (CMC). Expansin-like protein with probable fungal and plant cell wall loosening activity based on its non-enzymatic cellulose weakening activity in vitro. Increases glucose production by cellulase after pre-incubation of cellulose with this protein. In contrast, according to PubMed:23512479, no synergistic effect with cellulases. May have a structural role in the fungal cell wall based on its ability to bind chitin, but does not bind beta-1,3-glucan. The chain is Cerato-platanin from Ceratocystis fimbriata f. sp. platani.